Consider the following 151-residue polypeptide: Ubiquitin-like protein 4A-B (151 aa).

A Ubiquitin-like domain is found at 1 to 76 (MILTIKPLQG…LNLVVRPAGE (76 aa)).

In terms of assembly, component of the BAT3 complex.

It localises to the cytoplasm. The protein resides in the cytosol. Its function is as follows. Component of the BAT3 complex, a multiprotein complex involved in the post-translational delivery of tail-anchored (TA) membrane proteins to the endoplasmic reticulum membrane. TA membrane proteins, also named type II transmembrane proteins, contain a single C-terminal transmembrane region. The sequence is that of Ubiquitin-like protein 4A-B (ubl4ab) from Salmo salar (Atlantic salmon).